The sequence spans 115 residues: Rubredoxin (115 aa).

A Rubredoxin-like domain is found at 15–66 (SPNHECRACGYVYIPSQGDQKTSVSPGTPFEALPLNWKCPVCGAPRNYFIST). Positions 20, 23, 53, and 56 each coordinate Fe cation.

It belongs to the rubredoxin family. Fe(3+) is required as a cofactor.

Functionally, rubredoxin is a small nonheme, iron protein lacking acid-labile sulfide. Its single Fe, chelated to 4 Cys, functions as an electron acceptor and may also stabilize the conformation of the molecule. Could be involved in hydrogenase-linked redox processes. This Synechocystis sp. (strain ATCC 27184 / PCC 6803 / Kazusa) protein is Rubredoxin (rub).